We begin with the raw amino-acid sequence, 169 residues long: Thaumatin-like pathogenesis-related protein 3 (169 aa).

The first 21 residues, 1 to 21, serve as a signal peptide directing secretion; the sequence is MATSSAVLFLLLAVFAAGASA.

Belongs to the thaumatin family.

Functionally, associated with resistance against stem rust fungi. The chain is Thaumatin-like pathogenesis-related protein 3 (RASTL-3) from Avena sativa (Oat).